We begin with the raw amino-acid sequence, 525 residues long: GMP synthase [glutamine-hydrolyzing] (525 aa).

One can recognise a Glutamine amidotransferase type-1 domain in the interval 13 to 202; it reads TILVLDFGSQ…AVDLCHAKQN (190 aa). The active-site Nucleophile is C89. Residues H176 and E178 contribute to the active site. The 198-residue stretch at 203 to 400 folds into the GMPS ATP-PPase domain; that stretch reads WTMENFIDTE…LGIPHDLVWR (198 aa). 231 to 237 contacts ATP; the sequence is SGGVDST. A Glycyl lysine isopeptide (Lys-Gly) (interchain with G-Cter in ubiquitin) cross-link involves residue K241. XMP is bound at residue R304. K426 is covalently cross-linked (Glycyl lysine isopeptide (Lys-Gly) (interchain with G-Cter in ubiquitin)). XMP is bound by residues D462, K517, and E523.

In terms of assembly, homodimer. The cofactor is Mg(2+).

The protein localises to the cytoplasm. Its subcellular location is the cytosol. The enzyme catalyses XMP + L-glutamine + ATP + H2O = GMP + L-glutamate + AMP + diphosphate + 2 H(+). It functions in the pathway purine metabolism; GMP biosynthesis; GMP from XMP (L-Gln route): step 1/1. In terms of biological role, catalyzes the conversion of xanthine monophosphate (XMP) to GMP in the presence of glutamine and ATP through an adenyl-XMP intermediate. The sequence is that of GMP synthase [glutamine-hydrolyzing] from Saccharomyces cerevisiae (strain ATCC 204508 / S288c) (Baker's yeast).